Consider the following 382-residue polypeptide: V-type proton ATPase subunit C 1 (382 aa).

T2 carries the N-acetylthreonine modification.

It belongs to the V-ATPase C subunit family. In terms of assembly, V-ATPase is a heteromultimeric enzyme made up of two complexes: the ATP-hydrolytic V1 complex and the proton translocation V0 complex. The V1 complex consists of three catalytic AB heterodimers that form a heterohexamer, three peripheral stalks each consisting of EG heterodimers, one central rotor including subunits D and F, and the regulatory subunits C and H. The proton translocation complex V0 consists of the proton transport subunit a, a ring of proteolipid subunits c9c'', rotary subunit d, subunits e and f, and the accessory subunits ATP6AP1/Ac45 and ATP6AP2/PRR. As to expression, ubiquitous. Abundant in brain, liver, kidney and testis.

The protein resides in the cytoplasmic vesicle. Its subcellular location is the secretory vesicle. The protein localises to the synaptic vesicle membrane. It localises to the clathrin-coated vesicle membrane. Functionally, subunit of the V1 complex of vacuolar(H+)-ATPase (V-ATPase), a multisubunit enzyme composed of a peripheral complex (V1) that hydrolyzes ATP and a membrane integral complex (V0) that translocates protons. V-ATPase is responsible for acidifying and maintaining the pH of intracellular compartments and in some cell types, is targeted to the plasma membrane, where it is responsible for acidifying the extracellular environment. Subunit C is necessary for the assembly of the catalytic sector of the enzyme and is likely to have a specific function in its catalytic activity. This is V-type proton ATPase subunit C 1 (Atp6v1c1) from Mus musculus (Mouse).